Here is a 311-residue protein sequence, read N- to C-terminus: Malate dehydrogenase (311 aa).

NAD(+) is bound by residues 7 to 13 and D34; that span reads GAAGGIG. The substrate site is built by R81 and R87. NAD(+) is bound by residues N94 and 117 to 119; that span reads ITN. Residues N119 and R153 each coordinate substrate. The active-site Proton acceptor is H177. Residue M227 coordinates NAD(+).

The protein belongs to the LDH/MDH superfamily. MDH type 1 family. In terms of assembly, homodimer.

It catalyses the reaction (S)-malate + NAD(+) = oxaloacetate + NADH + H(+). Catalyzes the reversible oxidation of malate to oxaloacetate. The polypeptide is Malate dehydrogenase (Histophilus somni (strain 129Pt) (Haemophilus somnus)).